Here is a 515-residue protein sequence, read N- to C-terminus: Phospholipase A1-Igamma1, chloroplastic (515 aa).

Residues 1–44 constitute a chloroplast transit peptide; that stretch reads MATIPSHNLRPHTTNQRTQYSLSFRPHFSRSTLITFPARSSPAR. A GXSXG motif is present at residues 301-305; the sequence is GHSLG. Ser303 functions as the Acyl-ester intermediate in the catalytic mechanism. Catalysis depends on charge relay system residues Asp366 and His422.

It belongs to the AB hydrolase superfamily. Lipase family. As to expression, ubiquitous. Highly expressed in leaves.

The protein localises to the plastid. It is found in the chloroplast. It catalyses the reaction 1,2-dihexadecanoyl-sn-glycero-3-phosphocholine + H2O = 2-hexadecanoyl-sn-glycero-3-phosphocholine + hexadecanoate + H(+). It carries out the reaction a 1,2-diacyl-3-O-(beta-D-galactosyl)-sn-glycerol + H2O = an acyl-3-O-(beta-D-galactosyl)-sn-glycerol + a fatty acid + H(+). The enzyme catalyses a 1,2-diacyl-3-O-[alpha-D-galactosyl-(1-&gt;6)-beta-D-galactosyl]-sn-glycerol + H2O = acyl-3-O-[alpha-D-galactosyl-(1-&gt;6)-beta-D-galactosyl]-sn-glycerol + a fatty acid + H(+). In terms of biological role, acylhydrolase with a broad specificity. Catalyzes the hydrolysis of phosphatidylcholine at the sn-1 position. Moderate activity toward phosphatidylcholine (PC), monogalactosyldiacylglycerol (MGDG), digalactosyldiacylglycerol (DGDG) and triacylglycerol (TAG). May display dual sn-1/sn-2 substrate specificity. Could be involved in early wound response. The polypeptide is Phospholipase A1-Igamma1, chloroplastic (Arabidopsis thaliana (Mouse-ear cress)).